Reading from the N-terminus, the 122-residue chain is uncharacterized protein (122 aa).

The first 35 residues, 1 to 35, serve as a signal peptide directing secretion; it reads MCCYVGKATKIFLCLAAALIVVGLVLGFGLAHRTW. A disordered region spans residues 55–83; that stretch reads YGGGGGGGDPLPATSGAGDTPPGVPLTEP.

This is an uncharacterized protein from Oryza sativa subsp. japonica (Rice).